A 208-amino-acid polypeptide reads, in one-letter code: Probable molybdenum cofactor guanylyltransferase (208 aa).

Residues 12-14, K24, D72, and D101 contribute to the GTP site; that span reads IAG. Residue D101 participates in Mg(2+) binding.

Belongs to the MobA family. Requires Mg(2+) as cofactor.

It localises to the cytoplasm. It catalyses the reaction Mo-molybdopterin + GTP + H(+) = Mo-molybdopterin guanine dinucleotide + diphosphate. Its function is as follows. Transfers a GMP moiety from GTP to Mo-molybdopterin (Mo-MPT) cofactor (Moco or molybdenum cofactor) to form Mo-molybdopterin guanine dinucleotide (Mo-MGD) cofactor. This is Probable molybdenum cofactor guanylyltransferase from Chloroflexus aggregans (strain MD-66 / DSM 9485).